Consider the following 452-residue polypeptide: Probable carboxypeptidase ACLA_088580 (452 aa).

An N-terminal signal peptide occupies residues 1-18; it reads MRSLTLLLSLSTALRSVA. N107 and N156 each carry an N-linked (GlcNAc...) asparagine glycan. D175 provides a ligand contact to Zn(2+). The active-site Proton acceptor is the E207. Position 208 (E208) interacts with Zn(2+).

It belongs to the peptidase M20A family. Zn(2+) serves as cofactor.

It is found in the secreted. This is Probable carboxypeptidase ACLA_088580 from Aspergillus clavatus (strain ATCC 1007 / CBS 513.65 / DSM 816 / NCTC 3887 / NRRL 1 / QM 1276 / 107).